The chain runs to 225 residues: UPF0758 protein Shal_0429 (225 aa).

The region spanning 102–224 (ILSDPDLTRD…IVSFAERGWI (123 aa)) is the MPN domain. Zn(2+) contacts are provided by His173, His175, and Asp186. The JAMM motif motif lies at 173-186 (HNHPSGIAEPSTAD).

It belongs to the UPF0758 family.

The chain is UPF0758 protein Shal_0429 from Shewanella halifaxensis (strain HAW-EB4).